The primary structure comprises 117 residues: Appetite-regulating hormone (117 aa).

Residues Met1–Ala23 form the signal peptide. Ser26 carries the O-decanoyl serine; alternate lipid modification. A lipid anchor (O-hexanoyl serine; alternate) is attached at Ser26. The O-octanoyl serine; alternate moiety is linked to residue Ser26. The disordered stretch occupies residues Ser29–Ala52. Over residues Glu31–Lys43 the composition is skewed to basic and acidic residues. Residues Ala52–Arg75 constitute a propeptide, removed in mature form. Residue Leu98 is modified to Leucine amide. A propeptide spans Gly99–Glu117 (removed in mature form).

The protein belongs to the motilin family. O-octanoylated by GOAT/MBOAT4. O-octanoylation or O-decanoylation is essential for ghrelin activity. The O-decanoylated forms Ghrelin-27-C10 and Ghrelin-28-C10 differ in the length of the carbon backbone of the carboxylic acid bound to Ser-26. A small fraction of ghrelin, ghrelin-27-C10:1, ghrelin-27-C10:2, ghrelin-28-C8:1, ghrelin-28-C10:1, and ghrelin-28-C10:2, may be modified with singly or doubly unsaturated carboxylic acids. Post-translationally, amidation of Leu-98 is essential for obestatin activity.

The protein resides in the secreted. In terms of biological role, ghrelin is the ligand for growth hormone secretagogue receptor type 1 (GHSR). Induces the release of growth hormone from the pituitary. Has an appetite-stimulating effect, induces adiposity and stimulates gastric acid secretion. Involved in growth regulation. Functionally, obestatin may be the ligand for GPR39. May have an appetite-reducing effect resulting in decreased food intake. May reduce gastric emptying activity and jejunal motility. This Felis catus (Cat) protein is Appetite-regulating hormone (GHRL).